The primary structure comprises 524 residues: Alkaline phosphatase, tissue-nonspecific isozyme (524 aa).

The first 17 residues, 1–17, serve as a signal peptide directing secretion; that stretch reads MISPFLVLAIGTCLTNS. Aspartate 60 provides a ligand contact to Mg(2+). Positions 60 and 110 each coordinate Zn(2+). Catalysis depends on serine 110, which acts as the Phosphoserine intermediate. Position 110 is a phosphoserine (serine 110). Residues cysteine 139 and cysteine 201 are joined by a disulfide bond. An N-linked (GlcNAc...) asparagine glycan is attached at asparagine 140. Threonine 173 contacts Mg(2+). Residue asparagine 230 is glycosylated (N-linked (GlcNAc...) asparagine). Residue glutamate 235 participates in Ca(2+) binding. Asparagine 271 carries N-linked (GlcNAc...) asparagine glycosylation. Ca(2+) is bound by residues phenylalanine 290 and glutamate 291. A glycan (N-linked (GlcNAc...) asparagine) is linked at asparagine 303. Aspartate 306 is a binding site for Ca(2+). Mg(2+) is bound at residue glutamate 332. The Zn(2+) site is built by aspartate 337, histidine 341, aspartate 378, and histidine 379. An N-linked (GlcNAc...) asparagine glycan is attached at asparagine 430. Residue histidine 454 coordinates Zn(2+). Cysteine 489 and cysteine 497 form a disulfide bridge. Serine 501 carries GPI-anchor amidated serine lipidation. Residues 502–524 constitute a propeptide, removed in mature form; the sequence is SAGSLAAGPLLLALALYPLSVLF.

It belongs to the alkaline phosphatase family. Homodimer. Mg(2+) serves as cofactor. Zn(2+) is required as a cofactor. The cofactor is Ca(2+). Post-translationally, N-glycosylated.

It localises to the cell membrane. The protein localises to the extracellular vesicle membrane. It is found in the mitochondrion membrane. The protein resides in the mitochondrion intermembrane space. The enzyme catalyses a phosphate monoester + H2O = an alcohol + phosphate. It carries out the reaction diphosphate + H2O = 2 phosphate + H(+). It catalyses the reaction pyridoxal 5'-phosphate + H2O = pyridoxal + phosphate. The catalysed reaction is phosphoethanolamine + H2O = ethanolamine + phosphate. The enzyme catalyses N-phosphocreatine + H2O = creatine + phosphate. It carries out the reaction ATP + H2O = ADP + phosphate + H(+). It catalyses the reaction ADP + H2O = AMP + phosphate + H(+). The catalysed reaction is AMP + H2O = adenosine + phosphate. Its activity is regulated as follows. Phosphatase activity is specifically inhibited by 5-((5-chloro-2-methoxyphenyl)sulfonamido)nicotinamide (SBI-425). Alkaline phosphatase that metabolizes various phosphate compounds and plays a key role in skeletal mineralization and adaptive thermogenesis. Has broad substrate specificity and can hydrolyze a considerable variety of compounds: however, only a few substrates, such as diphosphate (inorganic pyrophosphate; PPi), pyridoxal 5'-phosphate (PLP) and N-phosphocreatine are natural substrates. Plays an essential role in skeletal and dental mineralization via its ability to hydrolyze extracellular diphosphate, a potent mineralization inhibitor, to phosphate: it thereby promotes hydroxyapatite crystal formation and increases inorganic phosphate concentration. Acts in a non-redundant manner with PHOSPHO1 in skeletal mineralization: while PHOSPHO1 mediates the initiation of hydroxyapatite crystallization in the matrix vesicles (MVs), ALPL/TNAP catalyzes the spread of hydroxyapatite crystallization in the extracellular matrix. Also promotes dephosphorylation of osteopontin (SSP1), an inhibitor of hydroxyapatite crystallization in its phosphorylated state; it is however unclear whether ALPL/TNAP mediates SSP1 dephosphorylation via a direct or indirect manner. Catalyzes dephosphorylation of PLP to pyridoxal (PL), the transportable form of vitamin B6, in order to provide a sufficient amount of PLP in the brain, an essential cofactor for enzymes catalyzing the synthesis of diverse neurotransmitters. Additionally, also able to mediate ATP degradation in a stepwise manner to adenosine, thereby regulating the availability of ligands for purinergic receptors. Also capable of dephosphorylating microbial products, such as lipopolysaccharides (LPS) as well as other phosphorylated small-molecules, such as poly-inosine:cytosine (poly I:C). Acts as a key regulator of adaptive thermogenesis as part of the futile creatine cycle: localizes to the mitochondria of thermogenic fat cells and acts by mediating hydrolysis of N-phosphocreatine to initiate a futile cycle of creatine dephosphorylation and phosphorylation. During the futile creatine cycle, creatine and N-phosphocreatine are in a futile cycle, which dissipates the high energy charge of N-phosphocreatine as heat without performing any mechanical or chemical work. This is Alkaline phosphatase, tissue-nonspecific isozyme from Homo sapiens (Human).